The chain runs to 60 residues: Large ribosomal subunit protein uL30 (60 aa).

It belongs to the universal ribosomal protein uL30 family. Part of the 50S ribosomal subunit.

This Desulforapulum autotrophicum (strain ATCC 43914 / DSM 3382 / VKM B-1955 / HRM2) (Desulfobacterium autotrophicum) protein is Large ribosomal subunit protein uL30.